We begin with the raw amino-acid sequence, 429 residues long: Chaperone SurA (429 aa).

Positions 1–19 (MKKTLLALLIASVMQSALA) are cleaved as a signal peptide. PpiC domains follow at residues 172 to 273 (RTEY…KLVD) and 283 to 381 (VEQY…LVEG).

The protein resides in the periplasm. It carries out the reaction [protein]-peptidylproline (omega=180) = [protein]-peptidylproline (omega=0). In terms of biological role, chaperone involved in the correct folding and assembly of outer membrane proteins. Recognizes specific patterns of aromatic residues and the orientation of their side chains, which are found more frequently in integral outer membrane proteins. May act in both early periplasmic and late outer membrane-associated steps of protein maturation. The protein is Chaperone SurA of Chromobacterium violaceum (strain ATCC 12472 / DSM 30191 / JCM 1249 / CCUG 213 / NBRC 12614 / NCIMB 9131 / NCTC 9757 / MK).